We begin with the raw amino-acid sequence, 499 residues long: MEIHIPSLVLCISFFIFFKIVSKLKTKTSNRKHLPLPPGPWKLPLIGNLHNLVGALPHHTLRRLSRKFGPMMSLQLGELSAVIISSADAAKEIMKTHDLNFASRPQVAAADIIGYGSTNITFSPYGGHWRQLRKICTLELLSAKRVQSFRPLRERVFVDLCRRFADHGSSAVNFSEEFMSATYTLISRAVLGEEAEQHEGLLPNVKEMPELTAGFDISEVFPSVGLFKVMSRLRKRIVAVHKDTDRILDDVIHQHRAAKSEEHKDLLDVLLQLQEDGLELPLTDENIKSVLVDMLVAGSETSSTVIEWAMAEMLKNPRILEKAQEEVRRVFDKEGTVDESHIHELKYLKSVVKETLRVHPPAPLILPRICGETCEINGYEIPAETKIIVNAWAVNRDPKYWEDSDCFKPERFLDNLVDFRGNHFQYIPFGAGRRMCPGIGFGLANVELPLAMFMYHFDWELDGGMKPQDLDMEEKFGASAKKLKDLFLIPAIKRTLPTK.

Residues 4–24 form a helical membrane-spanning segment; sequence HIPSLVLCISFFIFFKIVSKL. Cys436 lines the heme pocket.

This sequence belongs to the cytochrome P450 family. Heme serves as cofactor. In terms of tissue distribution, expressed in leaf glandular trichomes.

It is found in the membrane. The catalysed reaction is ferruginol + reduced [NADPH--hemoprotein reductase] + O2 = salviol + oxidized [NADPH--hemoprotein reductase] + H2O + H(+). It functions in the pathway secondary metabolite biosynthesis; terpenoid biosynthesis. Functionally, monooxygenase involved in the biosynthesis of labdane-related diterpenes natural products. Catalyzes the oxidation of ferruginol to produce salviol. Salviol is an intermediate in the biosynthesis of carnosate, a potent antioxidant. The chain is Salviol synthase from Salvia pomifera (Apple sage).